The following is a 757-amino-acid chain: Amine oxidase [copper-containing] 2 (757 aa).

Residues 1-4 (MNLK) lie on the Cytoplasmic side of the membrane. A helical membrane pass occupies residues 5 to 25 (VLLLLLGLSFLTVFALVYVLL). At 26-757 (TRQGSFSQSP…NLPSFSYEGL (732 aa)) the chain is on the extracellular side. N-linked (GlcNAc...) asparagine glycans are attached at residues N133, N198, and N226. D381 (proton acceptor) is an active-site residue. Residues C399 and C425 are joined by a disulfide bond. Catalysis depends on Y466, which acts as the Schiff-base intermediate with substrate; via topaquinone. Y466 bears the 2',4',5'-topaquinone mark. Positions 517 and 519 each coordinate Cu(2+). D526, L527, D528, E569, E638, F660, and N662 together coordinate Ca(2+). N-linked (GlcNAc...) asparagine glycosylation occurs at N663. Ca(2+)-binding residues include E664, D670, and L671. H681 serves as a coordination point for Cu(2+). Residues C731 and C738 are joined by a disulfide bond.

Belongs to the copper/topaquinone oxidase family. In terms of assembly, homodimer; disulfide-linked. Probably forms heterodimers with AOC3. Cu(2+) serves as cofactor. Ca(2+) is required as a cofactor. It depends on L-topaquinone as a cofactor. In terms of processing, topaquinone (TPQ) is generated by copper-dependent autoxidation of a specific tyrosyl residue. Significantly much highly expressed in retina.

It is found in the cell membrane. The enzyme catalyses 2-phenylethylamine + O2 + H2O = 2-phenylacetaldehyde + H2O2 + NH4(+). It carries out the reaction tryptamine + O2 + H2O = indole-3-acetaldehyde + H2O2 + NH4(+). The catalysed reaction is tyramine + O2 + H2O = (4-hydroxyphenyl)acetaldehyde + H2O2 + NH4(+). Catalyzes the oxidative deamination of primary amines to the corresponding aldehydes with the concomitant production of hydrogen peroxide and ammonia. Has a preference for 2-phenylethylamine, tryptamine and tyramine. Could also act on methylamine and benzylamine but much less efficiently. The chain is Amine oxidase [copper-containing] 2 from Mus musculus (Mouse).